The following is a 372-amino-acid chain: GTPase Obg (372 aa).

Residues 1–159 enclose the Obg domain; sequence MKFIDEARIE…RMLKLELKVL (159 aa). Residues 128–147 form a disordered region; the sequence is LHFKSSTNRAPRQKTDGKPG. The 175-residue stretch at 160 to 334 folds into the OBG-type G domain; that stretch reads ADVGLLGMPN…LVYAIYDYLA (175 aa). Residues 166 to 173, 191 to 195, 213 to 216, 284 to 287, and 315 to 317 contribute to the GTP site; these read GMPNAGKS, FTTLA, DIPG, NKLD, and SAL. 2 residues coordinate Mg(2+): Ser173 and Thr193.

The protein belongs to the TRAFAC class OBG-HflX-like GTPase superfamily. OBG GTPase family. In terms of assembly, monomer. Requires Mg(2+) as cofactor.

The protein localises to the cytoplasm. Functionally, an essential GTPase which binds GTP, GDP and possibly (p)ppGpp with moderate affinity, with high nucleotide exchange rates and a fairly low GTP hydrolysis rate. Plays a role in control of the cell cycle, stress response, ribosome biogenesis and in those bacteria that undergo differentiation, in morphogenesis control. The polypeptide is GTPase Obg (Burkholderia thailandensis (strain ATCC 700388 / DSM 13276 / CCUG 48851 / CIP 106301 / E264)).